The sequence spans 367 residues: MSSPPPARKGFYRQEVTKTAWEVRAVYQDLQPVGSGAYGAVCSAVDSRTGNKVAIKKLYRPFQSELFAKRAYRELRLLKHMRHENVIGLLDVFTPDESLDDFTDFYLVMPFMGTDLGKLMKHETLSEDRIQFLVYQMLKGLKYIHAAGVIHRDLKPGNLAVNEDCELKILDFGLARQADSEMTGYVVTRWYRAPEVILNWMRYTQTVDIWSVGCIMAEMITGKILFKGNDHLDQLKEIMKITGTPPPEFVQKLQSAEAKNYMEGLPELEKKDFASVLTNASPQAVNLLERMLVLDAEQRVTAAEALTHPYFESLRDTEDEPKAQKYDDSFDDVDRTLEEWKRVTYKEVLSFKPPRQLGARVPKETAL.

The Protein kinase domain maps to 27–311 (YQDLQPVGSG…AAEALTHPYF (285 aa)). ATP contacts are provided by residues 33-41 (VGSGAYGAV) and K56. The active-site Proton acceptor is the D153. T183 carries the phosphothreonine modification. The short motif at 183-185 (TGY) is the TXY element. Residue Y185 is modified to Phosphotyrosine.

Belongs to the protein kinase superfamily. CMGC Ser/Thr protein kinase family. MAP kinase subfamily. Monomer. Interacts with the PDZ domain of the syntrophin SNTA1. Interacts with SH3BP5, LIN7C, SCRIB and SYNJ2BP. Interacts with PTPN4; this interaction induces the activation of PTPN4 phosphatase activity. It depends on Mg(2+) as a cofactor. In terms of processing, dually phosphorylated on Thr-183 and Tyr-185 by MAP2K3/MKK3 and MAP2K6/MKK6, which activates the enzyme. Ubiquitinated. Ubiquitination leads to degradation by the proteasome pathway. Highly expressed in skeletal muscle. Also expressed in the heart, particularly in cardiac myocytes, lung, thymus and testes.

The protein resides in the cytoplasm. It localises to the nucleus. Its subcellular location is the mitochondrion. The enzyme catalyses L-seryl-[protein] + ATP = O-phospho-L-seryl-[protein] + ADP + H(+). The catalysed reaction is L-threonyl-[protein] + ATP = O-phospho-L-threonyl-[protein] + ADP + H(+). Activated by phosphorylation on threonine and tyrosine. MAP2K3/MKK3 and MAP2K6/MKK6 are both essential for the activation of MAPK12 induced by environmental stress, whereas MAP2K6/MKK6 is the major MAPK12 activator in response to TNF-alpha. Serine/threonine kinase which acts as an essential component of the MAP kinase signal transduction pathway. MAPK12 is one of the four p38 MAPKs which play an important role in the cascades of cellular responses evoked by extracellular stimuli such as pro-inflammatory cytokines or physical stress leading to direct activation of transcription factors such as ELK1 and ATF2. Accordingly, p38 MAPKs phosphorylate a broad range of proteins and it has been estimated that they may have approximately 200 to 300 substrates each. Some of the targets are downstream kinases such as MAPKAPK2, which are activated through phosphorylation and further phosphorylate additional targets. Plays a role in myoblast differentiation and also in the down-regulation of cyclin D1 in response to hypoxia in adrenal cells suggesting MAPK12 may inhibit cell proliferation while promoting differentiation. Phosphorylates DLG1. Following osmotic shock, MAPK12 in the cell nucleus increases its association with nuclear DLG1, thereby causing dissociation of DLG1-SFPQ complexes. This function is independent of its catalytic activity and could affect mRNA processing and/or gene transcription to aid cell adaptation to osmolarity changes in the environment. Regulates UV-induced checkpoint signaling and repair of UV-induced DNA damage and G2 arrest after gamma-radiation exposure. MAPK12 is involved in the regulation of SLC2A1 expression and basal glucose uptake in L6 myotubes; and negatively regulates SLC2A4 expression and contraction-mediated glucose uptake in adult skeletal muscle. C-Jun (JUN) phosphorylation is stimulated by MAPK14 and inhibited by MAPK12, leading to a distinct AP-1 regulation. MAPK12 is required for the normal kinetochore localization of PLK1, prevents chromosomal instability and supports mitotic cell viability. MAPK12-signaling is also positively regulating the expansion of transient amplifying myogenic precursor cells during muscle growth and regeneration. The polypeptide is Mitogen-activated protein kinase 12 (Mapk12) (Mus musculus (Mouse)).